Here is a 178-residue protein sequence, read N- to C-terminus: Ribosomal RNA small subunit methyltransferase G (178 aa).

Residues Gly54, Leu59, 105–106 (LE), and Arg120 each bind S-adenosyl-L-methionine.

Belongs to the methyltransferase superfamily. RNA methyltransferase RsmG family.

It is found in the cytoplasm. It carries out the reaction guanosine(527) in 16S rRNA + S-adenosyl-L-methionine = N(7)-methylguanosine(527) in 16S rRNA + S-adenosyl-L-homocysteine. In terms of biological role, specifically methylates the N7 position of guanine in position 527 of 16S rRNA. This Helicobacter acinonychis (strain Sheeba) protein is Ribosomal RNA small subunit methyltransferase G.